A 161-amino-acid polypeptide reads, in one-letter code: DNA-binding protein inhibitor ID-4 (161 aa).

Positions 52–104 (AAEAAADEPALCLQCDMNDCYSRLRRLVPTIPPNKKVSKVEILQHVIDYILDL) constitute a bHLH domain.

As to quaternary structure, heterodimer with other HLH proteins.

It localises to the nucleus. Its function is as follows. Transcriptional regulator (lacking a basic DNA binding domain) which negatively regulates the basic helix-loop-helix (bHLH) transcription factors by forming heterodimers and inhibiting their DNA binding and transcriptional activity. Implicated in regulating a variety of cellular processes, including cellular growth, senescence, differentiation, apoptosis, angiogenesis, and neoplastic transformation. This Mus musculus (Mouse) protein is DNA-binding protein inhibitor ID-4 (Id4).